The chain runs to 299 residues: MKKLQYIDRLTNQRVTEAVCYEKTMTLLYTSRLGKWLSTLLAKTPILSRIYGWIQKRSWTRRKIPGFVKRNHICVQEFKKSLSEFSSFNDFFTRELRPEARPIAQGDNICVAPVDGAYLIYPNIAEFGEFVVKSKHFSLSKLLGDASLVEKYASGSVVFARLALFDYHRFHFPVDCWAGPTRNVNGYLFSVHPMALKDNFNIFCENKRTLTELKTEAFGDVLYLEVGALNVGSIIQTYAPEKRYSKGDEKGFFEIGGSTVIILFQPGTIKFDADLLRNSRMGLETRCLMGQSLGRSLGE.

Residues Asp-115, His-171, and Ser-258 each act as charge relay system; for autoendoproteolytic cleavage activity in the active site. The active-site Schiff-base intermediate with substrate; via pyruvic acid; for decarboxylase activity is Ser-258. Pyruvic acid (Ser); by autocatalysis is present on Ser-258.

Belongs to the phosphatidylserine decarboxylase family. PSD-B subfamily. Prokaryotic type II sub-subfamily. Heterodimer of a large membrane-associated beta subunit and a small pyruvoyl-containing alpha subunit. Pyruvate serves as cofactor. Post-translationally, is synthesized initially as an inactive proenzyme. Formation of the active enzyme involves a self-maturation process in which the active site pyruvoyl group is generated from an internal serine residue via an autocatalytic post-translational modification. Two non-identical subunits are generated from the proenzyme in this reaction, and the pyruvate is formed at the N-terminus of the alpha chain, which is derived from the carboxyl end of the proenzyme. The autoendoproteolytic cleavage occurs by a canonical serine protease mechanism, in which the side chain hydroxyl group of the serine supplies its oxygen atom to form the C-terminus of the beta chain, while the remainder of the serine residue undergoes an oxidative deamination to produce ammonia and the pyruvoyl prosthetic group on the alpha chain. During this reaction, the Ser that is part of the protease active site of the proenzyme becomes the pyruvoyl prosthetic group, which constitutes an essential element of the active site of the mature decarboxylase.

The protein resides in the cell membrane. The catalysed reaction is a 1,2-diacyl-sn-glycero-3-phospho-L-serine + H(+) = a 1,2-diacyl-sn-glycero-3-phosphoethanolamine + CO2. Its pathway is phospholipid metabolism; phosphatidylethanolamine biosynthesis; phosphatidylethanolamine from CDP-diacylglycerol: step 2/2. Catalyzes the formation of phosphatidylethanolamine (PtdEtn) from phosphatidylserine (PtdSer). In Chlamydia felis (strain Fe/C-56) (Chlamydophila felis), this protein is Phosphatidylserine decarboxylase proenzyme.